We begin with the raw amino-acid sequence, 238 residues long: N-(5'-phosphoribosyl)anthranilate isomerase (238 aa).

The protein belongs to the TrpF family.

It carries out the reaction N-(5-phospho-beta-D-ribosyl)anthranilate = 1-(2-carboxyphenylamino)-1-deoxy-D-ribulose 5-phosphate. It participates in amino-acid biosynthesis; L-tryptophan biosynthesis; L-tryptophan from chorismate: step 3/5. The chain is N-(5'-phosphoribosyl)anthranilate isomerase from Methanosarcina acetivorans (strain ATCC 35395 / DSM 2834 / JCM 12185 / C2A).